Consider the following 771-residue polypeptide: Tubulin monoglycylase TTLL3 (771 aa).

The disordered stretch occupies residues 70–106; sequence PRPSFSQPRRHDHETETTDEGDSSDEDDLGEEVERDD. Over residues 86 to 106 the composition is skewed to acidic residues; that stretch reads TTDEGDSSDEDDLGEEVERDD. One can recognise a TTL domain in the interval 220-566; sequence EGEKMGEVHN…RRSERNTDTG (347 aa). ATP is bound by residues Lys339, 345 to 346, 377 to 380, 390 to 392, and 434 to 435; these read RG, QKYI, KFD, and CN. Arg345 lines the a protein pocket. L-glutamate is bound at residue Ser437. Positions 512, 525, and 527 each coordinate Mg(2+). Glu525 provides a ligand contact to ATP. Disordered stretches follow at residues 605 to 640 and 682 to 713; these read LIQS…EEVK and TELH…PTLY. The segment covering 614–633 has biased composition (polar residues); sequence SKSTNHKSSLLSSPCTSGKE.

Mg(2+) serves as cofactor.

The protein resides in the cytoplasm. It is found in the cytoskeleton. Its subcellular location is the cell projection. The protein localises to the cilium. It localises to the cilium axoneme. The protein resides in the flagellum axoneme. The catalysed reaction is L-glutamyl-[protein] + glycine + ATP = glycyl-L-glutamyl-[protein] + ADP + phosphate + H(+). In terms of biological role, monoglycylase which modifies alpha- and beta-tubulin, adding a single glycine on the gamma-carboxyl groups of specific glutamate residues to generate monoglycine side chains within the C-terminal tail of tubulin. Not involved in elongation step of the polyglycylation reaction. Preferentially glycylates a beta-tail peptide over the alpha-tail, although shifts its preference toward alpha-tail as beta-tail glutamylation increases. Competes with polyglutamylases for modification site on beta-tubulin substrate, thereby creating an anticorrelation between glycylation and glutamylation reactions. Not involved in elongation step of the polyglycylation reaction. The polypeptide is Tubulin monoglycylase TTLL3 (ttll3) (Danio rerio (Zebrafish)).